The primary structure comprises 574 residues: MRWSRCYIPTLKEAPSDAEVVSHKLLVRAGMIRKLTSGIYTFMPMGLRALNKVAAIVREEMNRAGAQEVLMPMVQPADLWQETGRWEFYGKELLRFRDRNDRDYCLGPTHEEVITDLVRGEVRSYRQLPINLYQIQTKFRDEIRPRFGLMRGREFVMKDAYSFDRDQAGCDESYKAMYTAYQRIFSRLGLRFRAVEADSGSIGGSFSHEFMVLADTGEDTLAVCTACEYAANVERAEVTGTPCTRPAAAALAEVPTPGAHTIEEVSAFLGVSADMLVKTLLFVADGEPVAALVRGDRELNEVKLKNLLGADSLELATPEQVEAWTGAPVGFAGPVGLHGVKRVFADTELEGDAGWIVGANKADTHLREVSLTRDAAIEAYADLRMITASDPCPRCGGAVELPKGIEVGHVFKLGLKYSKSMNATFLDENGKEQVMVMGCYGIGVSRVVASCIEQNNDGDGIVFPPPIAPYEVALLLLDPKNEEAAAKAAEIESFLEAEGHDVLLDDRDERPGVKFKDADLIGSPYQLVLGGKGLARGVVEAKNRRSGEKTELPVEGFAEAFRDWRAGVLKGWGL.

The protein belongs to the class-II aminoacyl-tRNA synthetase family. ProS type 1 subfamily. In terms of assembly, homodimer.

It localises to the cytoplasm. The enzyme catalyses tRNA(Pro) + L-proline + ATP = L-prolyl-tRNA(Pro) + AMP + diphosphate. Its function is as follows. Catalyzes the attachment of proline to tRNA(Pro) in a two-step reaction: proline is first activated by ATP to form Pro-AMP and then transferred to the acceptor end of tRNA(Pro). As ProRS can inadvertently accommodate and process non-cognate amino acids such as alanine and cysteine, to avoid such errors it has two additional distinct editing activities against alanine. One activity is designated as 'pretransfer' editing and involves the tRNA(Pro)-independent hydrolysis of activated Ala-AMP. The other activity is designated 'posttransfer' editing and involves deacylation of mischarged Ala-tRNA(Pro). The misacylated Cys-tRNA(Pro) is not edited by ProRS. The protein is Proline--tRNA ligase of Nitratidesulfovibrio vulgaris (strain DP4) (Desulfovibrio vulgaris).